Here is an 81-residue protein sequence, read N- to C-terminus: ATP synthase subunit c, chloroplastic (81 aa).

The next 2 helical transmembrane spans lie at 3–23 (PLIS…ASIG) and 57–77 (LAFM…LLFA).

It belongs to the ATPase C chain family. In terms of assembly, F-type ATPases have 2 components, F(1) - the catalytic core - and F(0) - the membrane proton channel. F(1) has five subunits: alpha(3), beta(3), gamma(1), delta(1), epsilon(1). F(0) has four main subunits: a(1), b(1), b'(1) and c(10-14). The alpha and beta chains form an alternating ring which encloses part of the gamma chain. F(1) is attached to F(0) by a central stalk formed by the gamma and epsilon chains, while a peripheral stalk is formed by the delta, b and b' chains.

Its subcellular location is the plastid. It localises to the chloroplast thylakoid membrane. In terms of biological role, f(1)F(0) ATP synthase produces ATP from ADP in the presence of a proton or sodium gradient. F-type ATPases consist of two structural domains, F(1) containing the extramembraneous catalytic core and F(0) containing the membrane proton channel, linked together by a central stalk and a peripheral stalk. During catalysis, ATP synthesis in the catalytic domain of F(1) is coupled via a rotary mechanism of the central stalk subunits to proton translocation. Key component of the F(0) channel; it plays a direct role in translocation across the membrane. A homomeric c-ring of between 10-14 subunits forms the central stalk rotor element with the F(1) delta and epsilon subunits. This is ATP synthase subunit c, chloroplastic from Pinus koraiensis (Korean pine).